The chain runs to 285 residues: MARCO-like protein (285 aa).

The signal sequence occupies residues 1 to 20 (MRAFIFFLFMLLAMFSASST). Asparagine 24 carries N-linked (GlcNAc...) asparagine glycosylation. 2 disordered regions span residues 47 to 77 (NHLGGQRDSNKQGGSYTQGNPGTFRLQGQPG) and 91 to 285 (GRAG…QGNL). Polar residues-rich tracts occupy residues 57-67 (KQGGSYTQGNP) and 105-114 (SGKSNQKGNP). The span at 115–128 (ESSNKQENSGSSSQ) shows a compositional bias: low complexity. The segment covering 134–145 (ISTQQGNPGSSD) has biased composition (polar residues). Residues 160-173 (GSSSQQGKPGSSSQ) show a composition bias toward low complexity. The span at 174–185 (HGNLGSSTQKGN) shows a compositional bias: polar residues. Over residues 186-220 (LGSSSLQGHLGLSSHQGKPESSGQQGKPGSSSQQG) the composition is skewed to low complexity. The segment covering 221 to 285 (NLGTSGQQEK…PGSSSRQGNL (65 aa)) has biased composition (polar residues).

This is MARCO-like protein from Homo sapiens (Human).